A 342-amino-acid polypeptide reads, in one-letter code: (Lyso)-N-acylphosphatidylethanolamine lipase (342 aa).

The AB hydrolase-1 domain occupies 70 to 324; that stretch reads PLVMVHGFGG…IEGASHHVYA (255 aa).

It belongs to the peptidase S33 family. ABHD4/ABHD5 subfamily.

The enzyme catalyses N-hexadecanoyl-1,2-di-(9Z-octadecenoyl)-sn-glycero-3-phosphoethanolamine + H2O = N-hexadecanoyl-1-(9Z-octadecenoyl)-sn-glycero-3-phosphoethanolamine + (9Z)-octadecenoate + H(+). It carries out the reaction an N-acyl-1,2-diacyl-sn-glycero-3-phosphoethanolamine + H2O = N,1-diacyl-sn-glycero-3-phosphoethanolamine + a fatty acid + H(+). It catalyses the reaction N-hexadecanoyl-1-(9Z-octadecenoyl)-sn-glycero-3-phosphoethanolamine + H2O = N-hexadecanoyl-sn-glycero-3-phosphoethanolamine + (9Z)-octadecenoate + H(+). The catalysed reaction is N-octadecanoyl-1-(9Z-octadecenoyl)-sn-glycero-3-phosphoethanolamine + H2O = N-octadecanoyl-sn-glycero-3-phospho-ethanolamine + (9Z)-octadecenoate + H(+). The enzyme catalyses N-eicosanoyl-1-(9Z-octadecenoyl)-sn-glycero-3-phosphoethanolamine + H2O = N-eicosanoyl-sn-glycero-3-phosphoethanolamine + (9Z)-octadecenoate + H(+). It carries out the reaction N,1-di-(9Z-octadecenoyl)-sn-glycero-3-phosphoethanolamine + H2O = N-(9Z-octadecenoyl)-sn-glycero-3-phosphoethanolamine + (9Z)-octadecenoate + H(+). It catalyses the reaction N-(5Z,8Z,11Z,14Z-eicosatetraenoyl)-1-(9Z-octadecenoyl)-sn-glycero-3-phosphoethanolamine + H2O = N-(5Z,8Z,11Z,14Z-eicosatetraenoyl)-sn-glycero-3-phosphoethanolamine + (9Z)-octadecenoate + H(+). The catalysed reaction is 1-octadecanoyl-2-(9Z-octadecenoyl)-sn-glycero-3-phospho-(N-hexadecanoyl)-serine + H2O = 1-octadecanoyl-2-hydroxy-sn-glycero-3-phospho-(N-hexadecanoyl)-serine + (9Z)-octadecenoate + H(+). The enzyme catalyses 1-O-(1Z-octadecenoyl)-2-(9Z-octadecenoyl)-sn-glycero-3-phospho-N-hexadecanoyl-ethanolamine + H2O = 1-O-(1Z-octadecenyl)-sn-glycero-3-phospho-N-hexadecanoyl-ethanolamine + (9Z)-octadecenoate + H(+). It carries out the reaction N,1-diacyl-sn-glycero-3-phosphoethanolamine + H2O = N-acyl-sn-glycero-3-phosphoethanolamine + a fatty acid + H(+). Functionally, lysophospholipase selective for N-acyl phosphatidylethanolamine (NAPE). Contributes to the biosynthesis of N-acyl ethanolamines, including the endocannabinoid anandamide by hydrolyzing the sn-1 and sn-2 acyl chains from N-acyl phosphatidylethanolamine (NAPE) generating glycerophospho-N-acyl ethanolamine (GP-NAE), an intermediate for N-acyl ethanolamine biosynthesis. Hydrolyzes substrates bearing saturated, monounsaturated, polyunsaturated N-acyl chains. Shows no significant activity towards other lysophospholipids, including lysophosphatidylcholine, lysophosphatidylethanolamine and lysophosphatidylserine. The chain is (Lyso)-N-acylphosphatidylethanolamine lipase from Bos taurus (Bovine).